Consider the following 232-residue polypeptide: Cilia- and flagella-associated protein 95 (232 aa).

Residues 1 to 96 (MDSSDSSCQE…PVWISETREK (96 aa)) lie on the Extracellular side of the membrane. The N-linked (GlcNAc...) asparagine glycan is linked to N75. The chain crosses the membrane as a helical span at residues 97-115 (MAQVCLNTKLAKIKSKALL). Over 116–232 (NEETMNSGII…TGGPIAPFLK (117 aa)) the chain is Cytoplasmic. Residues 153–163 (LTTYAEEYAPP) form a mn region.

In terms of assembly, microtubule inner protein component of sperm flagellar doublet microtubules. Interacts with MYH9. Interacts with MYH10. In terms of tissue distribution, expressed in trachea multiciliated cells.

It is found in the cytoplasm. Its subcellular location is the cytoskeleton. It localises to the cilium axoneme. The protein localises to the flagellum axoneme. The protein resides in the cell membrane. Functionally, microtubule inner protein (MIP) part of the dynein-decorated doublet microtubules (DMTs) in cilia axoneme, which is required for motile cilia beating. In Bos taurus (Bovine), this protein is Cilia- and flagella-associated protein 95.